A 1080-amino-acid chain; its full sequence is Serine/threonine-protein kinase KIC1 (1080 aa).

Residues 23-276 (FKRTEVIGRG…ADDLLKSKFI (254 aa)) enclose the Protein kinase domain. Residues 29–37 (IGRGKFGVV) and Lys52 each bind ATP. Asp144 serves as the catalytic Proton acceptor. Disordered stretches follow at residues 308 to 347 (EGSI…EIKR), 615 to 760 (KARS…LAPP), 787 to 831 (STLN…LQMP), and 901 to 956 (SQSI…NTGN). Residues 312 to 326 (PENEPSKPSEAPKPS) are compositionally biased toward low complexity. The span at 615–626 (KARSSTVTAGTP) shows a compositional bias: polar residues. The span at 627–638 (SSSSSIQYKSPS) shows a compositional bias: low complexity. The segment covering 656–673 (STITNQKLGSAVASNSGI) has biased composition (polar residues). Low complexity predominate over residues 674–689 (SSTPNNSNNYNNNTDS). Over residues 693–726 (RGSSGSNTANSTQMGITNPGNVTKLSTHKASSPS) the composition is skewed to polar residues. Position 735 is a phosphoserine (Ser735). Positions 743-756 (SPTQNIGHNSTHTN) are enriched in polar residues. The segment covering 787 to 807 (STLNTISGNSSNNLTSSNYFS) has biased composition (low complexity). The span at 808 to 821 (NEKEGSRVNGDFKR) shows a compositional bias: basic and acidic residues. The segment covering 901–913 (SQSISNRKNSSAS) has biased composition (polar residues). Positions 918-956 (NILGSSVSGNVSGIGNNNVGSNNNSGPNNSVPLSANTGN) are enriched in low complexity.

It belongs to the protein kinase superfamily. Ser/Thr protein kinase family. As to quaternary structure, interacts with CDC31.

The catalysed reaction is L-seryl-[protein] + ATP = O-phospho-L-seryl-[protein] + ADP + H(+). The enzyme catalyses L-threonyl-[protein] + ATP = O-phospho-L-threonyl-[protein] + ADP + H(+). Protein kinase involved in morphogenesis and cell integrity. This is Serine/threonine-protein kinase KIC1 (KIC1) from Saccharomyces cerevisiae (strain ATCC 204508 / S288c) (Baker's yeast).